Consider the following 557-residue polypeptide: Potassium-transporting ATPase potassium-binding subunit (557 aa).

Transmembrane regions (helical) follow at residues 5–25, 63–83, 132–152, 170–190, 253–273, 283–303, 329–349, 356–376, 379–399, 416–436, 484–504, and 526–546; these read GFLLIATFLLVLMVLARPLGS, LCAILGLNMLGLAVLFFMLLG, GLTVQNFLSAASGIAVIFALI, LLRITLWVLVPVALLIALFFI, FVQMLAIFLIPTALCFAFGEV, LLWAMSVIFVICVGVVMWAEV, VLVSSLFAVVTTAASCGAVIA, ALGGMVPMWLMQIGEVVFGGV, GLYGMMLFVLLAVFIAGLMIG, LTALAILVTPTLVLMGAALAM, LLAFCMFVGRFGVIIPVMAIA, and LFVGLLIGTVLLVGALTFIPA.

Belongs to the KdpA family. As to quaternary structure, the system is composed of three essential subunits: KdpA, KdpB and KdpC.

Its subcellular location is the cell inner membrane. In terms of biological role, part of the high-affinity ATP-driven potassium transport (or Kdp) system, which catalyzes the hydrolysis of ATP coupled with the electrogenic transport of potassium into the cytoplasm. This subunit binds the periplasmic potassium ions and delivers the ions to the membrane domain of KdpB through an intramembrane tunnel. This is Potassium-transporting ATPase potassium-binding subunit from Escherichia coli (strain SE11).